The following is a 494-amino-acid chain: Sphingosine-1-phosphate transporter MFSD2B (494 aa).

A compositionally biased stretch (pro residues) spans 1-12 (MSVPHGPTPAPV). Positions 1-26 (MSVPHGPTPAPVAEPHTQEPGSDKRD) are disordered. 10 consecutive transmembrane segments (helical) span residues 103 to 123 (LMPW…FLWF), 140 to 160 (CLFQ…TMIL), 179 to 199 (MAGT…AHGS), 223 to 243 (IAAA…CLGV), 277 to 297 (VVSF…LVLF), 310 to 330 (NLVL…EWVL), 339 to 359 (AFGI…PSAP), 360 to 380 (VAYV…LLPW), 402 to 422 (TIFY…ALGI), and 449 to 469 (VLIG…LLVG). Residues 473-494 (KMPRQDTSSQLSLRRRTSYSLA) are disordered. A compositionally biased stretch (basic residues) spans 485 to 494 (LRRRTSYSLA).

This sequence belongs to the major facilitator superfamily. As to expression, widely expressed with highest expression in spleen, lung and testis. Predominantly expressed in erythroid lineages giving rise to erythrocytes and platelets, but absent in lymphoid lineages.

It localises to the cell membrane. It catalyses the reaction sphing-4-enine 1-phosphate(in) = sphing-4-enine 1-phosphate(out). The catalysed reaction is sphinganine 1-phosphate(in) = sphinganine 1-phosphate(out). It carries out the reaction sphinga-4E,14Z-dienine-1-phosphate(in) = sphinga-4E,14Z-dienine-1-phosphate(out). Its function is as follows. Lipid transporter that specifically mediates export of sphingosine-1-phosphate in red blood cells and platelets. Sphingosine-1-phosphate is a signaling sphingolipid and its export from red blood cells into in the plasma is required for red blood cell morphology. Sphingosine-1-phosphate export from platelets is required for platelet aggregation and thrombus formation. Mediates the export of different sphingosine-1-phosphate (S1P) species, including S1P(d18:0) (sphinganine 1-phosphate), S1P (d18:1) (sphing-4-enine 1-phosphate) and S1P (d18:2) (sphinga-4E,14Z-dienine-1-phosphate). Release of sphingosine-1-phosphate is facilitated by a proton gradient. In contrast, cations, such as sodium, are not required to drive sphingosine-1-phosphate transport. In addition to export, also able to mediate S1P import. Does not transport lysophosphatidylcholine (LPC). The polypeptide is Sphingosine-1-phosphate transporter MFSD2B (Mus musculus (Mouse)).